A 2278-amino-acid chain; its full sequence is Genome polyprotein (2278 aa).

The region spanning 454-609 is the SF3 helicase domain; it reads LESTANSIRS…EDWKKKNPGK (156 aa). ATP is bound at residue 481–488; the sequence is GPPGIGKT. A disordered region spans residues 939 to 958; the sequence is EEAKGKTKHGRGAKHARRGG. Residues 944-956 show a composition bias toward basic residues; that stretch reads KTKHGRGAKHARR. Tyr-966 carries the O-(5'-phospho-RNA)-tyrosine modification. Residues 1056 to 1204 form the Peptidase C24 domain; the sequence is APTPIVTFTS…TKLAQRVTKT (149 aa). Catalysis depends on for 3CLpro activity residues His-1086, Glu-1107, and Cys-1171. A RdRp catalytic domain is found at 1443 to 1568; that stretch reads GVLYCLDYSK…SVCPATASIF (126 aa).

Homodimer. Homomultimer. Specific enzymatic cleavages in vivo yield mature proteins. Pro-Pol is first autocatalytically cleaved, then processes the whole polyprotein. Post-translationally, VPg is uridylylated by the polymerase and is covalently attached to the 5'-end of the polyadenylated genomic and subgenomic RNAs. This uridylylated form acts as a nucleotide-peptide primer for the polymerase.

It localises to the virion. It is found in the host cytoplasm. It carries out the reaction a ribonucleoside 5'-triphosphate + H2O = a ribonucleoside 5'-diphosphate + phosphate + H(+). The enzyme catalyses RNA(n) + a ribonucleoside 5'-triphosphate = RNA(n+1) + diphosphate. It catalyses the reaction Endopeptidase with a preference for cleavage when the P1 position is occupied by Glu-|-Xaa and the P1' position is occupied by Gly-|-Yaa.. Functionally, together with NTPase and NS4, initiates the formation of the replication complex. Induces the proliferation of the host smooth ER membranes forming long tubular structures. These remodeled membranes probably form the viral factories that contain the replication complex. In terms of biological role, displays NTPase activity, but no helicase activity. Induces the formation of convoluted membranes derived from the host ER. These remodeled membranes probably form the viral factories that contain the replication complex. Together with NS2 and NS4, initiates the formation of the replication complex. Its function is as follows. Probable key protein responsible for the formation of membrane alterations by the virus. Induces the formation of convoluted membranes derived from the host ER. These remodeled membranes probably form the viral factories that contain the replication complex. Together with NS2 and NTPase, initiates the formation of the replication complex. Viral genome-linked protein is covalently linked to the 5'-end of the positive-strand, negative-strand genomic RNAs and subgenomic RNA. Acts as a genome-linked replication primer. May recruit ribosome to viral RNA thereby promoting viral proteins translation. Interacts with host translation initiation complex to allow the translation of viral proteins. Functionally, protease-polymerase p76 processes the polyprotein: Pro-Pol is first released by autocleavage, then all other proteins are cleaved. Cleaves host translation initiation factor eIF4G1, eIF4G2 and PABP1 thereby inducing a shutdown of host protein synthesis. This shutdown may not prevent viral mRNA from being translated since viral Vpg replaces the cap. It is also an RNA-directed RNA polymerase which replicates genomic and antigenomic viral RNA by recognizing specific signals. Also transcribes a subgenomic mRNA by initiating RNA synthesis internally on antigenomic RNA. This sgRNA codes for structural proteins. Catalyzes the covalent attachment VPg with viral RNAs. In terms of biological role, capsid protein self assembles to form an icosahedral capsid with a T=3 symmetry, about 38 nm in diameter, and consisting of 180 capsid proteins. The capsid encapsulate the genomic RNA and VP2 proteins. Attaches virion to target cells, inducing endocytosis of the viral particle. Acidification of the endosome induces conformational change of capsid protein thereby injecting virus genomic RNA into host cytoplasm. This chain is Genome polyprotein, found in Homo sapiens (Human).